The sequence spans 393 residues: MIQTKDDFFALVNEIQSSAYYKEPLAFGIARVDRGQKNPEKILQATFPFINWKENYGSAAIFQKALHETGKLLNDESEAVYDVTKNFVAEALSYCNPWIEEAIGDAHKNVQVIKYLSTLDEEELANFKIVFLFEDAAPKSVEAVYLKLYALSTGKAALRSVNLNGAFGILHNVAWSGTTPIELDWLRENELELKMSGQYPVIDSVDKFPRFLQHIIPADNTRILDAAKVRMGAQLAAGTTVMPGASYINFNAGTLGPVMVEGRISSSAVVGKGSDVGGGASILGVLSGTSGNPISIGENCLLGANSVTGIPLGNGCIVDAGIAVLEGTKFFMSEADYEKIKEANPEWNAEYKEFFKGRELAGLSGLHFRQDSTSGQMKVFRSNKEVKLNEELH.

The active-site Acyl-anhydride intermediate is glutamate 261. Succinyl-CoA-binding positions include arginine 263, glycine 278, serine 281, alanine 304, 319–320, glycine 327, lysine 356, and 369–372; these read DA and RQDS.

The protein belongs to the type 2 tetrahydrodipicolinate N-succinyltransferase family. As to quaternary structure, homotrimer.

The protein resides in the cytoplasm. The enzyme catalyses (S)-2,3,4,5-tetrahydrodipicolinate + succinyl-CoA + H2O = (S)-2-succinylamino-6-oxoheptanedioate + CoA. Its pathway is amino-acid biosynthesis; L-lysine biosynthesis via DAP pathway; LL-2,6-diaminopimelate from (S)-tetrahydrodipicolinate (succinylase route): step 1/3. In terms of biological role, catalyzes the conversion of the cyclic tetrahydrodipicolinate (THDP) into the acyclic N-succinyl-L-2-amino-6-oxopimelate using succinyl-CoA. This chain is 2,3,4,5-tetrahydropyridine-2,6-dicarboxylate N-succinyltransferase, found in Nitratiruptor sp. (strain SB155-2).